Here is a 156-residue protein sequence, read N- to C-terminus: Small ribosomal subunit protein uS7 (156 aa).

Belongs to the universal ribosomal protein uS7 family. Part of the 30S ribosomal subunit. Contacts proteins S9 and S11.

Functionally, one of the primary rRNA binding proteins, it binds directly to 16S rRNA where it nucleates assembly of the head domain of the 30S subunit. Is located at the subunit interface close to the decoding center, probably blocks exit of the E-site tRNA. The polypeptide is Small ribosomal subunit protein uS7 (Syntrophotalea carbinolica (strain DSM 2380 / NBRC 103641 / GraBd1) (Pelobacter carbinolicus)).